The chain runs to 208 residues: Small ribosomal subunit protein uS4 (208 aa).

Residues Arg-98–Gly-168 enclose the S4 RNA-binding domain.

The protein belongs to the universal ribosomal protein uS4 family. Part of the 30S ribosomal subunit. Contacts protein S5. The interaction surface between S4 and S5 is involved in control of translational fidelity.

One of the primary rRNA binding proteins, it binds directly to 16S rRNA where it nucleates assembly of the body of the 30S subunit. Its function is as follows. With S5 and S12 plays an important role in translational accuracy. This chain is Small ribosomal subunit protein uS4, found in Desulforapulum autotrophicum (strain ATCC 43914 / DSM 3382 / VKM B-1955 / HRM2) (Desulfobacterium autotrophicum).